We begin with the raw amino-acid sequence, 453 residues long: Citrate (Re)-synthase (453 aa).

The region spanning 46-316 (IYITDTTFRD…TKNMKLHVIT (271 aa)) is the Pyruvate carboxyltransferase domain.

The protein belongs to the alpha-IPM synthase/homocitrate synthase family. Requires Mn(2+) as cofactor. It depends on Co(2+) as a cofactor. Mg(2+) serves as cofactor.

The catalysed reaction is oxaloacetate + acetyl-CoA + H2O = citrate + CoA + H(+). With respect to regulation, inhibited by p-chloromercuribenzoate (pCMB), EDTA, Zn(2+) ions, and under aerobic conditions. Catalyzes the condensation of the acetyl group of acetyl-CoA with oxaloacetate to form citrate. This enzyme is highly Re-face stereospecific with respect to the C-2 of oxaloacetate. The protein is Citrate (Re)-synthase of Clostridium kluyveri (strain ATCC 8527 / DSM 555 / NBRC 12016 / NCIMB 10680 / K1).